We begin with the raw amino-acid sequence, 37 residues long: Cytochrome b6-f complex subunit 5 (37 aa).

Residues 5–25 (FLFGIVLGLIPITLAGLFVTA) form a helical membrane-spanning segment.

This sequence belongs to the PetG family. The 4 large subunits of the cytochrome b6-f complex are cytochrome b6, subunit IV (17 kDa polypeptide, PetD), cytochrome f and the Rieske protein, while the 4 small subunits are PetG, PetL, PetM and PetN. The complex functions as a dimer.

The protein localises to the plastid. Its subcellular location is the chloroplast thylakoid membrane. Functionally, component of the cytochrome b6-f complex, which mediates electron transfer between photosystem II (PSII) and photosystem I (PSI), cyclic electron flow around PSI, and state transitions. PetG is required for either the stability or assembly of the cytochrome b6-f complex. The chain is Cytochrome b6-f complex subunit 5 from Solanum lycopersicum (Tomato).